The chain runs to 1328 residues: Tubulin polyglutamylase TTLL5 (1328 aa).

The interval 1 to 22 is disordered; the sequence is MPVVMARDLEETASSSEDEDLA. In terms of domain architecture, TTL spans 62–407; sequence RYHLSYKIVR…VCQDPAQRTS (346 aa). ATP is bound by residues K180, 186-187, 208-211, and 221-223; these read RG, SRYI, and KFD. R186 provides a ligand contact to a protein. R247 contributes to the L-glutamate binding site. 268–269 provides a ligand contact to ATP; that stretch reads TN. Residues Y270, S271, and K293 each contribute to the L-glutamate site. Positions 353, 366, and 368 each coordinate Mg(2+). The tract at residues 378–488 is c-MTBD region; that stretch reads PLDLKIKASM…RGGFIRIFPT (111 aa). K384 contacts L-glutamate. Disordered stretches follow at residues 411-436, 585-631, 834-853, 948-975, 1006-1032, 1085-1129, and 1212-1271; these read IYPSFESSRRNPFQKPQRTRPLSASD, AQPA…QAKY, HSKSSKNSSSYSDSGAKGDH, PALLLSPVPDNAPPSIHSGTQNVSPAGL, SSAKAAGSCHPHKHHSGIAKTQKEGED, RSSA…LQTG, and RISS…QLNG. Over residues 420–432 the composition is skewed to polar residues; the sequence is RNPFQKPQRTRPL. Acidic residues predominate over residues 597-617; sequence ESEEEEEVGLDNDDEEQEASQ. Residues 838 to 847 are compositionally biased toward low complexity; the sequence is SKNSSSYSDS. Composition is skewed to polar residues over residues 1116–1128, 1214–1227, 1234–1248, and 1257–1271; these read THSSPPGSRSLQT, SSATTGGQKPNTLP, PNSSTLVSKPASNHK, and QRASKGSSAEGQLNG.

It belongs to the tubulin--tyrosine ligase family. In terms of assembly, interacts with the transcriptional coactivators NCOA1/SRC-1 and NCOA2/TIF2. Mg(2+) serves as cofactor. As to expression, highly expressed in brain, kidney, liver, spleen and testis. Expressed in heart, lung, muscle and trachea.

It localises to the cell projection. It is found in the cilium. Its subcellular location is the cytoplasm. The protein localises to the cytoskeleton. The protein resides in the cilium basal body. It localises to the nucleus. The catalysed reaction is L-glutamyl-[protein] + L-glutamate + ATP = gamma-L-glutamyl-L-glutamyl-[protein] + ADP + phosphate + H(+). It catalyses the reaction (L-glutamyl)(n)-gamma-L-glutamyl-L-glutamyl-[protein] + L-glutamate + ATP = (L-glutamyl)(n+1)-gamma-L-glutamyl-L-glutamyl-[protein] + ADP + phosphate + H(+). Its function is as follows. Polyglutamylase which modifies tubulin, generating polyglutamate side chains on the gamma-carboxyl group of specific glutamate residues within the C-terminal tail of tubulin. Preferentially mediates ATP-dependent initiation step of the polyglutamylation reaction over the elongation step. Preferentially modifies the alpha-tubulin tail over a beta-tail. Required for CCSAP localization to both polyglutamylated spindle and cilia microtubules. Increases the effects of transcriptional coactivator NCOA2/TIF2 in glucocorticoid receptor-mediated repression and induction and in androgen receptor-mediated induction. In Mus musculus (Mouse), this protein is Tubulin polyglutamylase TTLL5.